The primary structure comprises 488 residues: Beta-xylosidase (488 aa).

Catalysis depends on Glu163, which acts as the Proton donor. The active-site Nucleophile is the Glu275.

It belongs to the glycosyl hydrolase 39 family.

The catalysed reaction is Hydrolysis of (1-&gt;4)-beta-D-xylans, to remove successive D-xylose residues from the non-reducing termini.. Functionally, beta-xylosidase is an intracellular xylan-degrading enzyme. This is Beta-xylosidase (xynB) from Caldicellulosiruptor saccharolyticus (Caldocellum saccharolyticum).